The chain runs to 365 residues: 3-dehydroquinate synthase (365 aa).

NAD(+) is bound by residues 95-99 (GVVGD), 119-120 (TT), lysine 132, and lysine 141. Positions 174, 238, and 255 each coordinate Zn(2+).

This sequence belongs to the sugar phosphate cyclases superfamily. Dehydroquinate synthase family. Co(2+) serves as cofactor. The cofactor is Zn(2+). NAD(+) is required as a cofactor.

The protein resides in the cytoplasm. The catalysed reaction is 7-phospho-2-dehydro-3-deoxy-D-arabino-heptonate = 3-dehydroquinate + phosphate. It functions in the pathway metabolic intermediate biosynthesis; chorismate biosynthesis; chorismate from D-erythrose 4-phosphate and phosphoenolpyruvate: step 2/7. Its function is as follows. Catalyzes the conversion of 3-deoxy-D-arabino-heptulosonate 7-phosphate (DAHP) to dehydroquinate (DHQ). This chain is 3-dehydroquinate synthase, found in Chlorobium chlorochromatii (strain CaD3).